The sequence spans 147 residues: Large ribosomal subunit protein uL13 (147 aa).

Belongs to the universal ribosomal protein uL13 family. In terms of assembly, part of the 50S ribosomal subunit.

In terms of biological role, this protein is one of the early assembly proteins of the 50S ribosomal subunit, although it is not seen to bind rRNA by itself. It is important during the early stages of 50S assembly. This Corynebacterium glutamicum (strain R) protein is Large ribosomal subunit protein uL13.